The sequence spans 990 residues: Aminopeptidase Q (990 aa).

The Cytoplasmic portion of the chain corresponds to 2–13 (GPPSSSGFYVSR). Residues 14-34 (AVALLLAGLVAALLLALAVLA) form a helical; Signal-anchor for type II membrane protein membrane-spanning segment. Topologically, residues 35–990 (ALYGHCERVP…RIAAWLRRNT (956 aa)) are lumenal. The tract at residues 48–91 (LPGLRDLEAESSPPLRQKPTPTPKPSSARELAVTTTPSNWRPPG) is disordered. 2 N-linked (GlcNAc...) asparagine glycosylation sites follow: N132 and N168. E240 contributes to the substrate binding site. 4 N-linked (GlcNAc...) asparagine glycosylation sites follow: N261, N288, N319, and N346. 379-383 (HAMEN) contributes to the substrate binding site. H415 is a binding site for Zn(2+). E416 functions as the Proton acceptor in the catalytic mechanism. Zn(2+)-binding residues include H419 and E438. Residue Y503 is the Proton donor of the active site. N-linked (GlcNAc...) asparagine glycans are attached at residues N607 and N653.

This sequence belongs to the peptidase M1 family. In terms of assembly, homodimer. The cofactor is Zn(2+). In terms of processing, N-glycosylated. In terms of tissue distribution, specifically expressed in placenta and not in other tissues. Mainly found at the cell surface region of the extravillous trophoblasts. Detected on extravillous trophoblasts in the outer layer of the chorion laeve in the fetal membrane Not detected on either fetal amnionic epithelial cells or maternal decidual cells. Also detected in the migrating extravillous trophoblasts in the maternal decidual tissues (at protein level).

It localises to the membrane. Its activity is regulated as follows. Inhibited by bestatin. Its function is as follows. Metalloprotease which may be important for placentation by regulating biological activity of key peptides at the embryo-maternal interface. On synthetic substrates it shows a marked preference for Leu-4-methylcoumaryl-7-amide (Leu-MCA) over Met-MCA, Arg-LCA and Lys-LCA. Cleaves the N-terminal amino acid of several peptides such as angiotensin-3, kisspeptin-10 and endokinin C. This Homo sapiens (Human) protein is Aminopeptidase Q.